Consider the following 585-residue polypeptide: Probable long-chain-fatty-acid--AMP ligase FadD30 (585 aa).

The protein belongs to the ATP-dependent AMP-binding enzyme family.

The protein operates within lipid metabolism; fatty acid biosynthesis. Catalyzes the activation of long-chain fatty acids as acyl-adenylates (acyl-AMP), which are then transferred to a multifunctional polyketide synthase (PKS) for further chain extension. The chain is Probable long-chain-fatty-acid--AMP ligase FadD30 (fadD30) from Mycobacterium tuberculosis (strain CDC 1551 / Oshkosh).